Here is a 404-residue protein sequence, read N- to C-terminus: Exodeoxyribonuclease 7 large subunit (404 aa).

The protein belongs to the XseA family. As to quaternary structure, heterooligomer composed of large and small subunits.

The protein resides in the cytoplasm. It catalyses the reaction Exonucleolytic cleavage in either 5'- to 3'- or 3'- to 5'-direction to yield nucleoside 5'-phosphates.. Bidirectionally degrades single-stranded DNA into large acid-insoluble oligonucleotides, which are then degraded further into small acid-soluble oligonucleotides. This Mesoplasma florum (strain ATCC 33453 / NBRC 100688 / NCTC 11704 / L1) (Acholeplasma florum) protein is Exodeoxyribonuclease 7 large subunit.